The sequence spans 148 residues: NADPH-dependent 7-cyano-7-deazaguanine reductase (148 aa).

The Thioimide intermediate role is filled by cysteine 50. The active-site Proton donor is the aspartate 57. Residues valine 72–serine 74 and histidine 91–glutamate 92 each bind substrate.

It belongs to the GTP cyclohydrolase I family. QueF type 1 subfamily.

The protein localises to the cytoplasm. It carries out the reaction 7-aminomethyl-7-carbaguanine + 2 NADP(+) = 7-cyano-7-deazaguanine + 2 NADPH + 3 H(+). The protein operates within tRNA modification; tRNA-queuosine biosynthesis. Catalyzes the NADPH-dependent reduction of 7-cyano-7-deazaguanine (preQ0) to 7-aminomethyl-7-deazaguanine (preQ1). In Helicobacter pylori (strain P12), this protein is NADPH-dependent 7-cyano-7-deazaguanine reductase.